Consider the following 89-residue polypeptide: Small ribosomal subunit protein uS17 (89 aa).

This sequence belongs to the universal ribosomal protein uS17 family. In terms of assembly, part of the 30S ribosomal subunit.

Its function is as follows. One of the primary rRNA binding proteins, it binds specifically to the 5'-end of 16S ribosomal RNA. The polypeptide is Small ribosomal subunit protein uS17 (Stenotrophomonas maltophilia (strain K279a)).